A 206-amino-acid chain; its full sequence is Imidazoleglycerol-phosphate dehydratase (206 aa).

The interval M1–T21 is disordered.

It belongs to the imidazoleglycerol-phosphate dehydratase family.

The protein resides in the cytoplasm. It carries out the reaction D-erythro-1-(imidazol-4-yl)glycerol 3-phosphate = 3-(imidazol-4-yl)-2-oxopropyl phosphate + H2O. It functions in the pathway amino-acid biosynthesis; L-histidine biosynthesis; L-histidine from 5-phospho-alpha-D-ribose 1-diphosphate: step 6/9. The protein is Imidazoleglycerol-phosphate dehydratase of Synechococcus sp. (strain JA-2-3B'a(2-13)) (Cyanobacteria bacterium Yellowstone B-Prime).